Reading from the N-terminus, the 104-residue chain is L-rhamnose mutarotase (104 aa).

Tyr18 is a substrate binding site. His22 serves as the catalytic Proton donor. Residues Tyr41 and 76 to 77 (WW) each bind substrate.

Belongs to the rhamnose mutarotase family. Homodimer.

It localises to the cytoplasm. The catalysed reaction is alpha-L-rhamnose = beta-L-rhamnose. It functions in the pathway carbohydrate metabolism; L-rhamnose metabolism. Functionally, involved in the anomeric conversion of L-rhamnose. This chain is L-rhamnose mutarotase, found in Burkholderia ambifaria (strain MC40-6).